The primary structure comprises 479 residues: Sulfate adenylyltransferase subunit 1 (479 aa).

In terms of domain architecture, tr-type G spans 25–239 (KSLLRFLTCG…EVLETVDIQR (215 aa)). Residues 34–41 (GSVDDGKS) form a G1 region. 34–41 (GSVDDGKS) contributes to the GTP binding site. The interval 92 to 96 (GITID) is G2. The segment at 113–116 (DTPG) is G3. Residues 113 to 117 (DTPGH) and 168 to 171 (NKMD) contribute to the GTP site. The tract at residues 168 to 171 (NKMD) is G4. The segment at 206 to 208 (SAL) is G5.

This sequence belongs to the TRAFAC class translation factor GTPase superfamily. Classic translation factor GTPase family. CysN/NodQ subfamily. In terms of assembly, heterodimer composed of CysD, the smaller subunit, and CysN.

It catalyses the reaction sulfate + ATP + H(+) = adenosine 5'-phosphosulfate + diphosphate. The protein operates within sulfur metabolism; hydrogen sulfide biosynthesis; sulfite from sulfate: step 1/3. Its function is as follows. With CysD forms the ATP sulfurylase (ATPS) that catalyzes the adenylation of sulfate producing adenosine 5'-phosphosulfate (APS) and diphosphate, the first enzymatic step in sulfur assimilation pathway. APS synthesis involves the formation of a high-energy phosphoric-sulfuric acid anhydride bond driven by GTP hydrolysis by CysN coupled to ATP hydrolysis by CysD. The chain is Sulfate adenylyltransferase subunit 1 from Salmonella choleraesuis (strain SC-B67).